Consider the following 61-residue polypeptide: Small ribosomal subunit protein uS14 (61 aa).

Zn(2+) is bound by residues cysteine 24, cysteine 27, cysteine 40, and cysteine 43.

Belongs to the universal ribosomal protein uS14 family. Zinc-binding uS14 subfamily. Part of the 30S ribosomal subunit. Contacts proteins S3 and S10. It depends on Zn(2+) as a cofactor.

Binds 16S rRNA, required for the assembly of 30S particles and may also be responsible for determining the conformation of the 16S rRNA at the A site. This Sulfurovum sp. (strain NBC37-1) protein is Small ribosomal subunit protein uS14.